Consider the following 95-residue polypeptide: Mitochondrial import inner membrane translocase subunit Tim13 (95 aa).

A Twin CX3C motif motif is present at residues 46 to 69 (CFKKCIGKPGSTLDNSEQKCIAMC). Cystine bridges form between Cys46/Cys69 and Cys50/Cys65.

This sequence belongs to the small Tim family. In terms of assembly, heterohexamer; composed of 3 copies of TIMM8 (TIMM8A or TIMM8B) and 3 copies of TIMM13, named soluble 70 kDa complex. Associates with the TIM22 complex, whose core is composed of TIMM22.

The protein resides in the mitochondrion inner membrane. Its function is as follows. Mitochondrial intermembrane chaperone that participates in the import and insertion of some multi-pass transmembrane proteins into the mitochondrial inner membrane. Also required for the transfer of beta-barrel precursors from the TOM complex to the sorting and assembly machinery (SAM complex) of the outer membrane. Acts as a chaperone-like protein that protects the hydrophobic precursors from aggregation and guide them through the mitochondrial intermembrane space. The TIMM8-TIMM13 complex mediates the import of some proteins while the predominant TIMM9-TIMM10 70 kDa complex mediates the import of much more proteins. The sequence is that of Mitochondrial import inner membrane translocase subunit Tim13 (timm13) from Danio rerio (Zebrafish).